The chain runs to 370 residues: Queuine tRNA-ribosyltransferase (370 aa).

Aspartate 93 serves as the catalytic Proton acceptor. Substrate-binding positions include 93–97 (DSGGF), aspartate 147, glutamine 189, and glycine 216. The interval 247–253 (GVGSPDC) is RNA binding. Aspartate 266 acts as the Nucleophile in catalysis. The RNA binding; important for wobble base 34 recognition stretch occupies residues 271–275 (TRIAR). Zn(2+) is bound by residues cysteine 304, cysteine 306, cysteine 309, and histidine 335.

It belongs to the queuine tRNA-ribosyltransferase family. Homodimer. Within each dimer, one monomer is responsible for RNA recognition and catalysis, while the other monomer binds to the replacement base PreQ1. Zn(2+) is required as a cofactor.

The enzyme catalyses 7-aminomethyl-7-carbaguanine + guanosine(34) in tRNA = 7-aminomethyl-7-carbaguanosine(34) in tRNA + guanine. It functions in the pathway tRNA modification; tRNA-queuosine biosynthesis. In terms of biological role, catalyzes the base-exchange of a guanine (G) residue with the queuine precursor 7-aminomethyl-7-deazaguanine (PreQ1) at position 34 (anticodon wobble position) in tRNAs with GU(N) anticodons (tRNA-Asp, -Asn, -His and -Tyr). Catalysis occurs through a double-displacement mechanism. The nucleophile active site attacks the C1' of nucleotide 34 to detach the guanine base from the RNA, forming a covalent enzyme-RNA intermediate. The proton acceptor active site deprotonates the incoming PreQ1, allowing a nucleophilic attack on the C1' of the ribose to form the product. After dissociation, two additional enzymatic reactions on the tRNA convert PreQ1 to queuine (Q), resulting in the hypermodified nucleoside queuosine (7-(((4,5-cis-dihydroxy-2-cyclopenten-1-yl)amino)methyl)-7-deazaguanosine). This Desulforamulus reducens (strain ATCC BAA-1160 / DSM 100696 / MI-1) (Desulfotomaculum reducens) protein is Queuine tRNA-ribosyltransferase.